Here is a 134-residue protein sequence, read N- to C-terminus: MVKFLKSGKVVVVLSGRFAGKKAVIVRNFDDGTSSRPYGHALVVGLQKEPRKVTKRQSQKKQAKKSTLKTFIKTVNYNHLMPTRYTLDVDFKGVAAEAQENPTKKVEARKECKKLLEEKFKTGKNRWFFTKLRF.

Positions 5–40 constitute a KOW domain; that stretch reads LKSGKVVVVLSGRFAGKKAVIVRNFDDGTSSRPYGH.

The protein belongs to the eukaryotic ribosomal protein eL27 family.

The protein is Large ribosomal subunit protein eL27 (RPL27) of Pyrobotrys stellatus (Green alga).